A 74-amino-acid polypeptide reads, in one-letter code: uncharacterized protein (74 aa).

This is an uncharacterized protein from Bacillus subtilis (strain 168).